The following is a 707-amino-acid chain: Signal transducer and activator of transcription A (707 aa).

Residues 70–89 are compositionally biased toward polar residues; that stretch reads LNQSDQFNLGRSNNLTPRTN. The tract at residues 70 to 246 is disordered; the sequence is LNQSDQFNLG…GNPNLSSPQP (177 aa). Residues 90–111 show a composition bias toward low complexity; it reads QLQQLQQQQQQQQQPQQQQQQQ. The segment covering 112–121 has biased composition (polar residues); that stretch reads TYGTQSPIHM. A compositionally biased stretch (low complexity) spans 142-238; that stretch reads QQSYNNNNSN…QQQQQQQQGN (97 aa). Residues 242-356 are a coiled coil; the sequence is SSPQPILDTI…IQSILNPQHS (115 aa). Residues 443–487 mediate DNA binding; it reads KFLAGTRKCSVNLKFGVNIRDLDNVTTTVESDASNPFVVITNECQ. In terms of domain architecture, SH2 spans 583–686; that stretch reads WQEGIIYGYM…FLKLHKDTAL (104 aa). Tyr702 bears the Phosphotyrosine mark.

The protein belongs to the transcription factor STAT family. Monomer, in the absence of tyrosine phosphorylation. Homodimer, or heterodimer with another family member, when tyrosine phosphorylated. Tyrosine phosphorylated in response to cAMP. Not tyrosine phosphorylated in growing cells. Tyrosine phosphorylation is first detected at the tight mound stage, continues throughout the slug stage and early culmination, and starts to decrease at mid-culmination. Barely detectable in fruiting bodies.

It localises to the cytoplasm. It is found in the nucleus. Functionally, transcription factor that binds to 5'-TTGAATTGA-3' elements in the promoter region of target genes. Functions as a repressor of the ecmB gene. Regulates the differentiation of prestalk cells during development. The chain is Signal transducer and activator of transcription A (dstA) from Dictyostelium discoideum (Social amoeba).